The primary structure comprises 158 residues: uncharacterized protein (158 aa).

One can recognise an HTH asnC-type domain in the interval 12–73 (LDEIDRAILR…LINPFKAGYE (62 aa)). A DNA-binding region (H-T-H motif) is located at residues 31–50 (YSEISRRINVPESTVRARVN).

This is an uncharacterized protein from Pyrococcus horikoshii (strain ATCC 700860 / DSM 12428 / JCM 9974 / NBRC 100139 / OT-3).